The primary structure comprises 121 residues: Large ribosomal subunit protein bL20 (121 aa).

The protein belongs to the bacterial ribosomal protein bL20 family.

In terms of biological role, binds directly to 23S ribosomal RNA and is necessary for the in vitro assembly process of the 50S ribosomal subunit. It is not involved in the protein synthesizing functions of that subunit. This is Large ribosomal subunit protein bL20 from Orientia tsutsugamushi (strain Boryong) (Rickettsia tsutsugamushi).